The primary structure comprises 328 residues: MPNYINYPSWLHPEVIQGIPITWYSLSYILIILISYKFIWYQIQSDNVDIKKEDYEIFMFSLVLGAILGGRLASTLVYDKSGIYYSNPWLILLPFDQHWNFTGFRGMAIHGGFLGAIIAPLITINTNLKNTNVQKYFLKLTDYGSIAFSSGYILGRLANFANAELYGRVMKGGIIFPNAEPFDTNIPGVKEFASSVGLEISPHDLLINLPRIPSQLIEGFFEGPVTFLLLWFLFKKIKKYDGFIFGVYVMLYAFFRFFIEYLREPDKELGFIITYKPITSLSEFSFLNISMGQILSLTLMLSGLIWIIVTKKIADKKIKNNTNLAYKN.

The next 3 helical transmembrane spans lie at 15-35, 57-77, and 106-126; these read VIQGIPITWYSLSYILIILIS, IFMFSLVLGAILGGRLASTLV, and GMAIHGGFLGAIIAPLITINT. A 1,2-diacyl-sn-glycero-3-phospho-(1'-sn-glycerol) is bound at residue Arg156. 2 helical membrane passes run 242-262 and 289-309; these read GFIFGVYVMLYAFFRFFIEYL and ISMGQILSLTLMLSGLIWIIV.

It belongs to the Lgt family.

It localises to the cell inner membrane. The enzyme catalyses L-cysteinyl-[prolipoprotein] + a 1,2-diacyl-sn-glycero-3-phospho-(1'-sn-glycerol) = an S-1,2-diacyl-sn-glyceryl-L-cysteinyl-[prolipoprotein] + sn-glycerol 1-phosphate + H(+). The protein operates within protein modification; lipoprotein biosynthesis (diacylglyceryl transfer). In terms of biological role, catalyzes the transfer of the diacylglyceryl group from phosphatidylglycerol to the sulfhydryl group of the N-terminal cysteine of a prolipoprotein, the first step in the formation of mature lipoproteins. This is Phosphatidylglycerol--prolipoprotein diacylglyceryl transferase from Borreliella burgdorferi (strain ATCC 35210 / DSM 4680 / CIP 102532 / B31) (Borrelia burgdorferi).